The primary structure comprises 141 residues: Large ribosomal subunit protein uL16 (141 aa).

This sequence belongs to the universal ribosomal protein uL16 family. In terms of assembly, part of the 50S ribosomal subunit. Contacts the CTC protein (RL25).

Binds the 5S and 23S rRNAs and is also seen to make contacts with the A and P site tRNAs. Interacts with A site tRNA mimics, and is probably one of the key factors, along with a helix of the 23S rRNA, in positioning tRNA stems in the peptidyl-transferase center. In Deinococcus radiodurans (strain ATCC 13939 / DSM 20539 / JCM 16871 / CCUG 27074 / LMG 4051 / NBRC 15346 / NCIMB 9279 / VKM B-1422 / R1), this protein is Large ribosomal subunit protein uL16 (rplP).